A 42-amino-acid polypeptide reads, in one-letter code: DDTPSSRCGSGGWGPCLPIVDLLCIVHVTVGCSGGFGCCRIG.

3 disulfides stabilise this stretch: Cys-8/Cys-38, Cys-16/Cys-32, and Cys-24/Cys-39.

It is found in the secreted. The protein localises to the extracellular space. The protein resides in the extracellular matrix. Induces the nucleation and stabilization of vaterite, one of the crystalline polymorphs of calcium carbonate. Exhibits strong antimicrobial activity against Pseudomonas aeruginosa and Proteus vulgaris. The sequence is that of Pelovaterin from Pelodiscus sinensis (Chinese softshell turtle).